Reading from the N-terminus, the 137-residue chain is Fluoride-specific ion channel FluC 1 (137 aa).

Helical transmembrane passes span 4–24 (LIYI…YYLG), 37–57 (LATL…TTYI), 67–87 (VITG…TFSV), and 100–120 (IAFL…GLGY). Na(+)-binding residues include Gly77 and Thr80.

The protein belongs to the fluoride channel Fluc/FEX (TC 1.A.43) family.

It is found in the cell membrane. The enzyme catalyses fluoride(in) = fluoride(out). Its activity is regulated as follows. Na(+) is not transported, but it plays an essential structural role and its presence is essential for fluoride channel function. In terms of biological role, fluoride-specific ion channel. Important for reducing fluoride concentration in the cell, thus reducing its toxicity. The polypeptide is Fluoride-specific ion channel FluC 1 (Bacillus thuringiensis subsp. konkukian (strain 97-27)).